A 1224-amino-acid chain; its full sequence is Cytosolic carboxypeptidase 1 (1224 aa).

The interval 361-398 (PPDVDDVVDESDDNDDAETESEIETEDDKDQNFKNDDI) is disordered. The segment covering 363–389 (DVDDVVDESDDNDDAETESEIETEDDK) has biased composition (acidic residues). The Peptidase M14 domain maps to 846 to 1136 (YPYTYSTLKM…KFCVGLLRLK (291 aa)). H918, E921, and H1015 together coordinate Zn(2+). E1100 serves as the catalytic Proton donor/acceptor. Positions 1186–1197 (SAESNDDQDAEL) are enriched in acidic residues. A disordered region spans residues 1186–1224 (SAESNDDQDAELADNVGDYEANNQEDGLSDSDSTRILLS). Residues 1206-1224 (ANNQEDGLSDSDSTRILLS) are compositionally biased toward polar residues.

This sequence belongs to the peptidase M14 family. The cofactor is Zn(2+).

The protein resides in the cytoplasm. It localises to the cytosol. It is found in the nucleus. The protein localises to the mitochondrion. It carries out the reaction (L-glutamyl)(n+1)-gamma-L-glutamyl-L-glutamyl-[protein] + H2O = (L-glutamyl)(n)-gamma-L-glutamyl-L-glutamyl-[protein] + L-glutamate. It catalyses the reaction C-terminal L-alpha-aminoacyl-L-glutamyl-L-glutamyl-[tubulin] + H2O = C-terminal L-alpha-aminoacyl-L-glutamyl-[tubulin] + L-glutamate. Metallocarboxypeptidase that mediates protein deglutamylation of tubulin and non-tubulin target proteins. Catalyzes the removal of polyglutamate side chains present on the gamma-carboxyl group of glutamate residues within the C-terminal tail of alpha- and beta-tubulin. Specifically cleaves tubulin long-side-chains, while it is not able to remove the branching point glutamate. Also catalyzes the removal of polyglutamate residues from the carboxy-terminus of alpha-tubulin as well as non-tubulin proteins. This is Cytosolic carboxypeptidase 1 (AGTPBP1) from Gallus gallus (Chicken).